Here is a 277-residue protein sequence, read N- to C-terminus: Formamidopyrimidine-DNA glycosylase (277 aa).

P2 functions as the Schiff-base intermediate with DNA in the catalytic mechanism. E3 (proton donor) is an active-site residue. The active-site Proton donor; for beta-elimination activity is the K58. DNA is bound by residues H94, R113, and R156. The FPG-type zinc finger occupies 241 to 277; sequence LVYGREGVPCPNCGAEHPIQRITQAGRSTFFCPTCQK. The active-site Proton donor; for delta-elimination activity is the R267.

It belongs to the FPG family. As to quaternary structure, monomer. The cofactor is Zn(2+).

It carries out the reaction Hydrolysis of DNA containing ring-opened 7-methylguanine residues, releasing 2,6-diamino-4-hydroxy-5-(N-methyl)formamidopyrimidine.. The enzyme catalyses 2'-deoxyribonucleotide-(2'-deoxyribose 5'-phosphate)-2'-deoxyribonucleotide-DNA = a 3'-end 2'-deoxyribonucleotide-(2,3-dehydro-2,3-deoxyribose 5'-phosphate)-DNA + a 5'-end 5'-phospho-2'-deoxyribonucleoside-DNA + H(+). Involved in base excision repair of DNA damaged by oxidation or by mutagenic agents. Acts as a DNA glycosylase that recognizes and removes damaged bases. Has a preference for oxidized purines, such as 7,8-dihydro-8-oxoguanine (8-oxoG). Has AP (apurinic/apyrimidinic) lyase activity and introduces nicks in the DNA strand. Cleaves the DNA backbone by beta-delta elimination to generate a single-strand break at the site of the removed base with both 3'- and 5'-phosphates. In Gluconobacter oxydans (strain 621H) (Gluconobacter suboxydans), this protein is Formamidopyrimidine-DNA glycosylase.